The sequence spans 319 residues: Tetrahydromethanopterin S-methyltransferase subunit H (319 aa).

Belongs to the MtrH family. The complex is composed of 8 subunits; MtrA, MtrB, MtrC, MtrD, MtrE, MtrF, MtrG and MtrH.

It carries out the reaction 5-methyl-5,6,7,8-tetrahydromethanopterin + coenzyme M + 2 Na(+)(in) = 5,6,7,8-tetrahydromethanopterin + methyl-coenzyme M + 2 Na(+)(out). The protein operates within one-carbon metabolism; methanogenesis from CO(2); methyl-coenzyme M from 5,10-methylene-5,6,7,8-tetrahydromethanopterin: step 2/2. Its function is as follows. Part of a complex that catalyzes the formation of methyl-coenzyme M and tetrahydromethanopterin from coenzyme M and methyl-tetrahydromethanopterin. This is an energy-conserving, sodium-ion translocating step. MtrH catalyzes the transfer of the methyl group from methyl-tetrahydromethanopterin to the corrinoid prosthetic group of MtrA. This is Tetrahydromethanopterin S-methyltransferase subunit H from Methanocaldococcus jannaschii (strain ATCC 43067 / DSM 2661 / JAL-1 / JCM 10045 / NBRC 100440) (Methanococcus jannaschii).